Reading from the N-terminus, the 346-residue chain is Short-chain dehydrogenase/reductase bet4 (346 aa).

The disordered stretch occupies residues 1–35 (MTPAKAPSHAKKPEAGSQPISSMWTQMFPPKPTYT). 4 residues coordinate NADP(+): valine 56, lysine 80, aspartate 105, and asparagine 132. The Proton donor role is filled by serine 191. NADP(+)-binding residues include tyrosine 222 and lysine 226. Catalysis depends on tyrosine 222, which acts as the Proton acceptor. Lysine 226 (lowers pKa of active site Tyr) is an active-site residue.

It belongs to the short-chain dehydrogenases/reductases (SDR) family.

It catalyses the reaction dehydroprobetaenone I + AH2 = probetaenone I + A. The protein operates within mycotoxin biosynthesis. Its function is as follows. Short-chain dehydrogenase/reductase; part of the gene cluster that mediates the biosynthesis of betaenones, phytotoxic polyketides involved in leaf spot disease in sugar beets. The first step of the pathway is the synthesis of dehydroprobetaenone I by the polyketide synthase bet1 and the enoyl reductase bet3 via condensation of one acetyl-CoA starter unit with 7 malonyl-CoA units and 5 methylations. The C-terminal reductase (R) domain of bet1 catalyzes the reductive release of the polyketide chain. Because bet1 lacks a designated enoylreductase (ER) domain, the required activity is provided the enoyl reductase bet3. The short-chain dehydrogenase/reductase bet4 then catalyzes reduction of dehydroprobetaenone I to probetaenone I. The cytochrome P450 monooxygenase bet2 catalyzes successive epoxidation, oxidation (resulting from epoxide opening) and hydroxylation to install a tertiary alcohol in the decaline ring to yield betaenone C from dehydroprobetaenone I and betaenone B from probetaenone I. The FAD-linked oxidoreductase (orf1) is probably responsible for the conversion of betaenone C to betaenone A via an intramolecular aldol reaction between C-1 and C-17 to form the bridged tricyclic system in betaenone A. This is Short-chain dehydrogenase/reductase bet4 from Neocamarosporium betae (Beet black rot fungus).